Reading from the N-terminus, the 75-residue chain is Protein SlyX homolog (75 aa).

This sequence belongs to the SlyX family.

The polypeptide is Protein SlyX homolog (Vibrio campbellii (strain ATCC BAA-1116)).